The following is a 66-amino-acid chain: Large ribosomal subunit protein bL35 (66 aa).

Residues 25-45 form a disordered region; the sequence is QAAGKRHGMSKRPQKMKRNAR. Basic residues predominate over residues 28-44; it reads GKRHGMSKRPQKMKRNA.

The protein belongs to the bacterial ribosomal protein bL35 family.

The chain is Large ribosomal subunit protein bL35 from Rhodospirillum centenum (strain ATCC 51521 / SW).